The following is a 435-amino-acid chain: Elongation factor 1-alpha (435 aa).

One can recognise a tr-type G domain in the interval 5 to 226 (KTHINLVVIG…DTMEPPKRPT (222 aa)). The tract at residues 14–21 (GHVDSGKS) is G1. Residue 14-21 (GHVDSGKS) participates in GTP binding. Residues 70–74 (GITID) form a G2 region. The tract at residues 91–94 (DAPG) is G3. Residues 91–95 (DAPGH) and 151–154 (NKMD) contribute to the GTP site. The interval 151-154 (NKMD) is G4. Residues 190 to 192 (SGF) are G5.

It belongs to the TRAFAC class translation factor GTPase superfamily. Classic translation factor GTPase family. EF-Tu/EF-1A subfamily.

Its subcellular location is the cytoplasm. Its function is as follows. This protein promotes the GTP-dependent binding of aminoacyl-tRNA to the A-site of ribosomes during protein biosynthesis. In Cryptosporidium parvum, this protein is Elongation factor 1-alpha.